We begin with the raw amino-acid sequence, 318 residues long: Methionyl-tRNA formyltransferase (318 aa).

Residue 112–115 (SILP) participates in (6S)-5,6,7,8-tetrahydrofolate binding.

The protein belongs to the Fmt family.

The catalysed reaction is L-methionyl-tRNA(fMet) + (6R)-10-formyltetrahydrofolate = N-formyl-L-methionyl-tRNA(fMet) + (6S)-5,6,7,8-tetrahydrofolate + H(+). Its function is as follows. Attaches a formyl group to the free amino group of methionyl-tRNA(fMet). The formyl group appears to play a dual role in the initiator identity of N-formylmethionyl-tRNA by promoting its recognition by IF2 and preventing the misappropriation of this tRNA by the elongation apparatus. The sequence is that of Methionyl-tRNA formyltransferase from Haemophilus influenzae (strain PittGG).